The sequence spans 74 residues: uncharacterized protein (74 aa).

This is an uncharacterized protein from Treponema pallidum (strain Nichols).